A 232-amino-acid polypeptide reads, in one-letter code: Protein Mis18-alpha (232 aa).

Phosphoserine occurs at positions 36, 39, and 40. Positions 79–177 (PLVFLCSGCR…SVEAIESYIL (99 aa)) constitute a Mis18 domain. 4 residues coordinate Zn(2+): C84, C87, C140, and C143. K161 is covalently cross-linked (Glycyl lysine isopeptide (Lys-Gly) (interchain with G-Cter in SUMO2)). Residue S232 is modified to Phosphoserine.

It belongs to the mis18 family. As to quaternary structure, homodimer, and heterodimer with OIP5/MIS18B. Identified in a complex containing MIS18A, OIP5/MIS18B, MIS18BP1, RBBP7 and RBBP4.

The protein localises to the nucleus. It is found in the chromosome. Its subcellular location is the centromere. In terms of biological role, required for recruitment of CENPA to centromeres and normal chromosome segregation during mitosis. The protein is Protein Mis18-alpha (MIS18A) of Otolemur garnettii (Small-eared galago).